Here is a 268-residue protein sequence, read N- to C-terminus: 4-hydroxy-tetrahydrodipicolinate reductase (268 aa).

Residues 9–14 (GAAGRM), 99–101 (GTT), and 123–126 (ASNF) each bind NAD(+). The Proton donor/acceptor role is filled by His156. Position 157 (His157) interacts with (S)-2,3,4,5-tetrahydrodipicolinate. Residue Lys160 is the Proton donor of the active site. 166–167 (GT) serves as a coordination point for (S)-2,3,4,5-tetrahydrodipicolinate.

This sequence belongs to the DapB family.

Its subcellular location is the cytoplasm. It catalyses the reaction (S)-2,3,4,5-tetrahydrodipicolinate + NAD(+) + H2O = (2S,4S)-4-hydroxy-2,3,4,5-tetrahydrodipicolinate + NADH + H(+). The enzyme catalyses (S)-2,3,4,5-tetrahydrodipicolinate + NADP(+) + H2O = (2S,4S)-4-hydroxy-2,3,4,5-tetrahydrodipicolinate + NADPH + H(+). The protein operates within amino-acid biosynthesis; L-lysine biosynthesis via DAP pathway; (S)-tetrahydrodipicolinate from L-aspartate: step 4/4. In terms of biological role, catalyzes the conversion of 4-hydroxy-tetrahydrodipicolinate (HTPA) to tetrahydrodipicolinate. This chain is 4-hydroxy-tetrahydrodipicolinate reductase, found in Saccharophagus degradans (strain 2-40 / ATCC 43961 / DSM 17024).